We begin with the raw amino-acid sequence, 138 residues long: CLAVATA3/ESR (CLE)-related protein 2 (138 aa).

A signal peptide spans 1 to 22; that stretch reads MPNIFKILLIVLLAVVSFRLSA. The tract at residues 23 to 90 is required for secretion from the host cytoplasm to the host apoplasm; it reads STGDKKTAND…VPSHVTNRSM (68 aa). Residues Asn-37, Asn-87, and Asn-123 are each glycosylated (N-linked (GlcNAc...) asparagine). Disordered regions lie at residues 66–97 and 116–138; these read AIGR…PPPV and LAEK…PHHH. The CLE motif lies at 127–138; it reads RLSPSGPDPHHH.

This sequence belongs to the CLV3/ESR signal peptide family. Highly expressed exclusively within the dorsal esophageal gland cell during syncytium formation in host plants (at protein level).

It localises to the secreted. The protein resides in the host cytoplasm. Its subcellular location is the host extracellular space. It is found in the extracellular space. The protein localises to the apoplast. Functionally, mimics host plant CLE extracellular signal peptides that regulate cell fate. May play a role in the differentiation or division of feeding cells (syncytia) induced in plant roots during infection. This Heterodera glycines (Soybean cyst nematode worm) protein is CLAVATA3/ESR (CLE)-related protein 2 (CLE2).